The chain runs to 135 residues: C-type lectin LmsL (135 aa).

Intrachain disulfides connect Cys3/Cys14, Cys31/Cys131, Cys38/Cys133, and Cys106/Cys123. Residues 10–132 form the C-type lectin domain; sequence MNGLCYKIFD…CESKNAFLCQ (123 aa). Residues Gln96, Asp98, Glu104, Asn119, and Asp120 each contribute to the Ca(2+) site. Residues 96–98 carry the Galactose-binding motif; sequence QPD.

It belongs to the true venom lectin family. As to quaternary structure, homodimer; disulfide-linked. In terms of tissue distribution, expressed by the venom gland.

The protein localises to the secreted. In terms of biological role, galactose-binding protein which recognizes specific carbohydrate structures and agglutinates a variety of animal cells by binding to cell-surface glycoproteins and glycolipids. Is a calcium-dependent lectin. Shows high hemagglutinating activity, that is inhibited by lactose, galactose and inositol. This Lachesis stenophrys (Central American bushmaster) protein is C-type lectin LmsL.